A 532-amino-acid chain; its full sequence is Putative F-box/LRR-repeat protein At3g42770 (532 aa).

Residues methionine 1–serine 46 enclose the F-box domain. 3 LRR repeats span residues valine 113–serine 135, isoleucine 279–methionine 305, and methionine 398–leucine 420.

The polypeptide is Putative F-box/LRR-repeat protein At3g42770 (Arabidopsis thaliana (Mouse-ear cress)).